The following is a 151-amino-acid chain: Hemoglobin-2 (151 aa).

At threonine 2 the chain carries N-acetylthreonine. The 146-residue stretch at 3-148 (TLTNPQKAAI…ICKTLGDYMK (146 aa)) folds into the Globin domain. A heme b-binding site is contributed by histidine 97.

Belongs to the globin family. As to quaternary structure, homotetramer.

The protein localises to the cytoplasm. The polypeptide is Hemoglobin-2 (Phacoides pectinatus (Thick lucine)).